The following is a 115-amino-acid chain: Peptidyl-tRNA hydrolase (115 aa).

The protein belongs to the PTH2 family.

Its subcellular location is the cytoplasm. It carries out the reaction an N-acyl-L-alpha-aminoacyl-tRNA + H2O = an N-acyl-L-amino acid + a tRNA + H(+). Its function is as follows. The natural substrate for this enzyme may be peptidyl-tRNAs which drop off the ribosome during protein synthesis. The chain is Peptidyl-tRNA hydrolase from Methanosarcina acetivorans (strain ATCC 35395 / DSM 2834 / JCM 12185 / C2A).